A 305-amino-acid polypeptide reads, in one-letter code: Protoheme IX farnesyltransferase 2 (305 aa).

Helical transmembrane passes span 38-58, 60-80, 115-135, 157-177, 181-201, 236-256, and 285-305; these read LITT…SFLG, LNTV…SCAV, ILLI…AAVI, INTV…WTAV, IGVV…PHFL, VACL…IVIL, and FVYS…FTLF.

This sequence belongs to the UbiA prenyltransferase family. Protoheme IX farnesyltransferase subfamily. In terms of assembly, interacts with CtaA.

The protein resides in the cell membrane. The enzyme catalyses heme b + (2E,6E)-farnesyl diphosphate + H2O = Fe(II)-heme o + diphosphate. It functions in the pathway porphyrin-containing compound metabolism; heme O biosynthesis; heme O from protoheme: step 1/1. Its function is as follows. Converts heme B (protoheme IX) to heme O by substitution of the vinyl group on carbon 2 of heme B porphyrin ring with a hydroxyethyl farnesyl side group. In Bacillus velezensis (strain DSM 23117 / BGSC 10A6 / LMG 26770 / FZB42) (Bacillus amyloliquefaciens subsp. plantarum), this protein is Protoheme IX farnesyltransferase 2.